Here is a 195-residue protein sequence, read N- to C-terminus: Probable GTP-binding protein EngB (195 aa).

The EngB-type G domain maps to 22-194 (LKGEVAFVGR…LDLISTLLKE (173 aa)). GTP is bound by residues 30–37 (GRSNVGKS), 56–60 (GKTRS), 74–77 (DLPG), 141–144 (TKMD), and 173–175 (TSS). Residues serine 37 and threonine 58 each coordinate Mg(2+).

It belongs to the TRAFAC class TrmE-Era-EngA-EngB-Septin-like GTPase superfamily. EngB GTPase family. Mg(2+) serves as cofactor.

Functionally, necessary for normal cell division and for the maintenance of normal septation. The chain is Probable GTP-binding protein EngB from Thermotoga petrophila (strain ATCC BAA-488 / DSM 13995 / JCM 10881 / RKU-1).